The sequence spans 860 residues: Protein argonaute-3 (860 aa).

The 120-residue stretch at 230 to 349 (PVIQFMCEVL…LPLEVCNIVA (120 aa)) folds into the PAZ domain. Residues 518–819 (LIIVILPGKT…VAFRARYHLV (302 aa)) form the Piwi domain. Residues 530-567 (YAEVKRVGDTLLGMATQCVQVKNVVKTSPQTLSNLCLK) form an interaction with guide RNA region. Residues D598, E638, and D670 each contribute to the a divalent metal cation site. An interaction with guide RNA region spans residues 758 to 805 (QGTSRPSHYYVLWDDNCFTADEFQLLTYQLCHTYVRCTRSVSIPAPAY). A divalent metal cation is bound at residue H808.

It belongs to the argonaute family. Ago subfamily.

The protein resides in the cytoplasm. Its subcellular location is the P-body. It carries out the reaction Endonucleolytic cleavage to 5'-phosphomonoester.. Its function is as follows. Required for RNA-mediated gene silencing (RNAi). Binds to short RNAs such as microRNAs (miRNAs) and represses the translation of mRNAs which are complementary to them. Possesses RNA slicer activity but only on select RNAs bearing 5'- and 3'-flanking sequences to the region of guide-target complementarity. This Danio rerio (Zebrafish) protein is Protein argonaute-3 (ago3).